The following is an 817-amino-acid chain: MQNWDTATNNNSNNNKSPALTMQQTAANSNNFLEHNTWYNQMFAANIKQEPGTINPHHQHPQQHSSMMASQPQHSPLTHSANHLENYLKQHAHNGGGAHHLQFSDNSGAMTPSPNTNVGGQDFGFESNTSSALNPSLQQHQLYQQHFQQAQQAAAQNQVSSHLPLGFNPLTPPGLPNAVLPAMNHYYSQQQQQQQQRQLQQTPSPSACLSDAHEKSSALTPRHTPPMDITPPKSPKTTVQAMDHQQHPEDQDLISNSSEDLKYIAESEDDESIRMPIYNSHGKMKNHKCKSCGMVAITKMAFWEHARTHMKPEKILQCPKCPFVTELKHHLEYHIRKHKNLKPFQCDKCSYSCVNKSMLNSHRKSHSSVYQYRCADCDYATKYCHSFKLHLRKYEHKPGMVLDEEGIPNPSVVIDVYGTRRGPKNKSAANAALKKACSDLKIPPTSQLSAALQGFPLQQQQQPQQPASPAKSSSSVASELPALTLNMSLQQNLAQQQQQQQQSPGAQSHSSQQQINNLLPPLASLLQQNRNMAFFPYWNLNLQMLAAQQQAAVLAQLSPRMREQLQQQQQNKQANENGEEDEEDNDEVDEDEEEFDGKSVDSAMDLSQGTPTKEEQQTPELAMNLKLSEEHGETPLFSSSAAARRKGRVLKLDQEKTAGHLQIASAPTSPQHHLHHNNEMPPTTSSPIHPSQVNGVAAGAADHSSADESMETGHHHHHHNPTTANTSASSTASSSGNSSNSSSTSTSSNSNSSSAGNSPNTTMYECKYCDIFFKDAVLYTIHMGYHSCDDVFKCNMCGEKCDGPVGLFVHMARNAHS.

Disordered stretches follow at residues 51 to 77, 93 to 132, and 187 to 252; these read PGTI…HSPL, HNGG…TSSA, and YSQQ…EDQD. The segment covering 62–76 has biased composition (low complexity); that stretch reads QQHSSMMASQPQHSP. Residues 103–119 are compositionally biased toward polar residues; it reads FSDNSGAMTPSPNTNVG. Low complexity predominate over residues 189-201; that stretch reads QQQQQQQQRQLQQ. C2H2-type zinc fingers lie at residues 287–309, 316–338, 344–366, and 372–396; these read HKCK…ARTH, LQCP…IRKH, FQCD…RKSH, and YRCA…KYEH. Disordered regions lie at residues 456–477, 491–513, 564–619, and 666–758; these read PLQQ…SSVA, QNLA…SSQQ, QLQQ…QQTP, and APTS…AGNS. Over residues 564-576 the composition is skewed to low complexity; it reads QLQQQQQNKQANE. Residues 577-595 are compositionally biased toward acidic residues; it reads NGEEDEEDNDEVDEDEEEF. Polar residues predominate over residues 680-694; that stretch reads MPPTTSSPIHPSQVN. Residues 721–758 are compositionally biased toward low complexity; that stretch reads PTTANTSASSTASSSGNSSNSSSTSTSSNSNSSSAGNS. C2H2-type zinc fingers lie at residues 764-786 and 792-816; these read YECK…MGYH and FKCN…RNAH.

It belongs to the hunchback C2H2-type zinc-finger protein family.

The protein localises to the nucleus. In terms of biological role, gap class segmentation protein that controls development of head structures. The chain is Protein hunchback (hb) from Musca domestica (House fly).